Reading from the N-terminus, the 290-residue chain is MGDGGAERDRGPARRAESGGGGGRCGDRSGAGDLRADGGGHSPTEVAGTSASSPAGSRESGADSDGQPGPGEADHCRRILVRDAKGTIREIVLPKGLDLDRPKRTRTSFTAEQLYRLEMEFQRCQYVVGRERTELARQLNLSETQVKVWFQNRRTKQKKDQSRDLEKRASSSASEAFATSNILRLLEQGRLLSVPRAPSLLALTPSLPGLPASHRGTSLGDPRNSSPRLNPLSSASASPPLPPPLPAVCFSSAPLLDLPAGYELGSSAFEPYSWLERKVGSASSCKKANT.

A compositionally biased stretch (basic and acidic residues) spans 1 to 17; sequence MGDGGAERDRGPARRAE. The segment at 1–75 is disordered; that stretch reads MGDGGAERDR…GQPGPGEADH (75 aa). Positions 102–161 form a DNA-binding region, homeobox; the sequence is PKRTRTSFTAEQLYRLEMEFQRCQYVVGRERTELARQLNLSETQVKVWFQNRRTKQKKDQ. The interval 205–240 is disordered; that stretch reads PSLPGLPASHRGTSLGDPRNSSPRLNPLSSASASPP. Residues 222–238 show a composition bias toward low complexity; that stretch reads PRNSSPRLNPLSSASAS.

This sequence belongs to the EMX homeobox family.

The protein localises to the nucleus. Functionally, transcription factor that may function in dorsoventral specification of the forebrain. Regulates the expression of Wnt signaling antagonists including the expression of a truncated TCF7L2 isoform that cannot bind CTNNB1 and acts therefore as a potent dominant-negative Wnt antagonist. Plays a crucial role in eye development and, in particular, in the specification of the ventral optic vesicle. May be a regulator of axial polarization in the retina. The sequence is that of Ventral anterior homeobox 2 (VAX2) from Homo sapiens (Human).